The following is a 374-amino-acid chain: Lipoyl synthase, mitochondrial (374 aa).

The N-terminal 19 residues, 1 to 19 (MHSRSALLYRFLRPASRCF), are a transit peptide targeting the mitochondrion. [4Fe-4S] cluster is bound by residues Cys103, Cys108, Cys114, Cys134, Cys138, Cys141, and Ser350. The region spanning 119–339 (ETGTATATIM…RLLGMEMGFR (221 aa)) is the Radical SAM core domain.

The protein belongs to the radical SAM superfamily. Lipoyl synthase family. Requires [4Fe-4S] cluster as cofactor. In terms of tissue distribution, expressed in leaves and flowers, but not in roots. Expressed in roots, rosette leaves, cauline leaves, stems, flowers and siliques.

The protein localises to the mitochondrion. The enzyme catalyses [[Fe-S] cluster scaffold protein carrying a second [4Fe-4S](2+) cluster] + N(6)-octanoyl-L-lysyl-[protein] + 2 oxidized [2Fe-2S]-[ferredoxin] + 2 S-adenosyl-L-methionine + 4 H(+) = [[Fe-S] cluster scaffold protein] + N(6)-[(R)-dihydrolipoyl]-L-lysyl-[protein] + 4 Fe(3+) + 2 hydrogen sulfide + 2 5'-deoxyadenosine + 2 L-methionine + 2 reduced [2Fe-2S]-[ferredoxin]. The protein operates within protein modification; protein lipoylation via endogenous pathway; protein N(6)-(lipoyl)lysine from octanoyl-[acyl-carrier-protein]: step 2/2. In terms of biological role, catalyzes the radical-mediated insertion of two sulfur atoms into the C-6 and C-8 positions of the octanoyl moiety bound to the lipoyl domains of lipoate-dependent enzymes, thereby converting the octanoylated domains into lipoylated derivatives. Together with LIP2 is essential for mitochondrial protein lipoylation during seed development. Required for the lipoylation of mitochondrial pyruvate dehydrogenase component E2 proteins in leaves and roots. The sequence is that of Lipoyl synthase, mitochondrial from Arabidopsis thaliana (Mouse-ear cress).